The sequence spans 382 residues: Histidinol-phosphate aminotransferase (382 aa).

Lys-215 carries the N6-(pyridoxal phosphate)lysine modification. The interval 363–382 (NIDNQSKTHSQTSSIRKGTI) is disordered.

It belongs to the class-II pyridoxal-phosphate-dependent aminotransferase family. Histidinol-phosphate aminotransferase subfamily. In terms of assembly, homodimer. Requires pyridoxal 5'-phosphate as cofactor.

The catalysed reaction is L-histidinol phosphate + 2-oxoglutarate = 3-(imidazol-4-yl)-2-oxopropyl phosphate + L-glutamate. It functions in the pathway amino-acid biosynthesis; L-histidine biosynthesis; L-histidine from 5-phospho-alpha-D-ribose 1-diphosphate: step 7/9. The chain is Histidinol-phosphate aminotransferase from Yersinia pseudotuberculosis serotype O:1b (strain IP 31758).